Here is a 325-residue protein sequence, read N- to C-terminus: Olfactory receptor 6Y1 (325 aa).

Residues 1–30 (MTTIILEVDNHTVTTRFILLGFPTRPAFQL) are Extracellular-facing. A glycan (N-linked (GlcNAc...) asparagine) is linked at Asn10. Residues 31–51 (LFFSIFLATYLLTLLENLLII) form a helical membrane-spanning segment. The Cytoplasmic portion of the chain corresponds to 52 to 59 (LAIHSDGQ). A helical membrane pass occupies residues 60–80 (LHKPMYFFLSHLSFLEMWYVT). The Extracellular portion of the chain corresponds to 81 to 104 (VISPKMLVDFLSHDKSISFNGCMT). A disulfide bond links Cys102 and Cys194. A helical transmembrane segment spans residues 105–125 (QLYFFVTFVCTEYILLAIMAF). Residues 126-144 (DRYVAICNPLRYPVIMTNQ) lie on the Cytoplasmic side of the membrane. A helical transmembrane segment spans residues 145–165 (LCGTLAGGCWFCGLMTAMIKM). Residues 166–202 (VFIAQLHYCGMPQINHYFCDISPLLNVSCEDASQAEM) lie on the Extracellular side of the membrane. Asn191 is a glycosylation site (N-linked (GlcNAc...) asparagine). Residues 203 to 222 (VDFFLALMVIAIPLCVVVAS) traverse the membrane as a helical segment. Topologically, residues 223–242 (YAAILATILRIPSAQGRQKA) are cytoplasmic. A helical transmembrane segment spans residues 243-263 (FSTCASHLTVVILFYSMTLFT). The Extracellular segment spans residues 264 to 276 (YARPKLMYAYNSN). Residues 277–297 (KVVSVLYTVIVPLLNPIIYCL) form a helical membrane-spanning segment. Residues 298–325 (RNHEVKAALRKTIHCRGSGPQGNGAFSS) are Cytoplasmic-facing.

The protein belongs to the G-protein coupled receptor 1 family.

The protein localises to the cell membrane. Its function is as follows. Odorant receptor. The chain is Olfactory receptor 6Y1 (OR6Y1) from Homo sapiens (Human).